Consider the following 463-residue polypeptide: SVGFKAGVKDYKLTYYTPDYETKDTDILAAFRVTPQPGVPPEEAGGAVAAESSTGTWTTVWTDGLTSLDRYKGRCYHIEPVAGEENQYIAYVAYPLDLFEEGSVTNMFTSIVGNVFGFKALRALRLEDLRIPPAYVKTFQGPPHGIQVERDKLNKYGRPLLGCTIKPKLGLSAKNYGRAVFECLRGGLDFTKDDENVNSQPFMRWRDRFLFCAEAIYKAQAETGEIKGHYLNATAGTCEEMMKRAVFARELGVPIVMHDYLTGGFTANTSLAHYCRDNGLLLHIHRAMHAVIDRQKNHGIHFRVLAKALRMSGGDHIHSGTVVGKLEGERDITLGFVDLLRDDFVEKDRSRGIYFTQDWVSLPGVLTVASGGIHVWHMPALTEIFGDDSVLQFGGGTLGHPWGNAPGAVANRVALEACVQARNEGRDLATEGNAIIRKACKWSTELAAACEVWKEIKFEFAAM.

At lysine 5 the chain carries N6,N6,N6-trimethyllysine. Positions 114 and 164 each coordinate substrate. Lysine 166 (proton acceptor) is an active-site residue. Lysine 168 contacts substrate. Positions 192, 194, and 195 each coordinate Mg(2+). Lysine 192 bears the N6-carboxylysine mark. The active-site Proton acceptor is histidine 285. 3 residues coordinate substrate: arginine 286, histidine 318, and serine 370.

It belongs to the RuBisCO large chain family. Type I subfamily. As to quaternary structure, heterohexadecamer of 8 large chains and 8 small chains; disulfide-linked. The disulfide link is formed within the large subunit homodimers. Mg(2+) is required as a cofactor. Post-translationally, the disulfide bond which can form in the large chain dimeric partners within the hexadecamer appears to be associated with oxidative stress and protein turnover.

Its subcellular location is the plastid. The protein resides in the chloroplast. It catalyses the reaction 2 (2R)-3-phosphoglycerate + 2 H(+) = D-ribulose 1,5-bisphosphate + CO2 + H2O. The enzyme catalyses D-ribulose 1,5-bisphosphate + O2 = 2-phosphoglycolate + (2R)-3-phosphoglycerate + 2 H(+). In terms of biological role, ruBisCO catalyzes two reactions: the carboxylation of D-ribulose 1,5-bisphosphate, the primary event in carbon dioxide fixation, as well as the oxidative fragmentation of the pentose substrate in the photorespiration process. Both reactions occur simultaneously and in competition at the same active site. This Pelargonium grandiflorum (Geranium) protein is Ribulose bisphosphate carboxylase large chain.